Consider the following 1347-residue polypeptide: Protocadherin-11 X-linked (1347 aa).

The signal sequence occupies residues 1–23; that stretch reads MDLLSGTYIFAVLLACVVFHSGA. Residues 24-812 lie on the Extracellular side of the membrane; that stretch reads QEKNYTIREE…VSSPTSDYVK (789 aa). 7 Cadherin domains span residues 26–139, 140–249, 250–355, 362–466, 467–570, 571–673, and 677–795; these read KNYT…APLF, PATV…HPVF, KETE…VPSI, NPIN…APVF, TQSF…SPVF, THNE…KPVF, and PSNY…APVT. Asparagine 27, asparagine 48, and asparagine 54 each carry an N-linked (GlcNAc...) asparagine glycan. The N-linked (GlcNAc...) asparagine glycan is linked to asparagine 344. The N-linked (GlcNAc...) asparagine glycan is linked to asparagine 553. Asparagine 773 carries an N-linked (GlcNAc...) asparagine glycan. A helical transmembrane segment spans residues 813–833; the sequence is ILVAAVAGTVTVVVVIFITAV. Residues 834–1347 are Cytoplasmic-facing; the sequence is VRCRQAPHLK…DSPIMEEHPL (514 aa). Disordered stretches follow at residues 1031–1050, 1057–1091, 1097–1116, and 1325–1347; these read IWIH…GKSQ, LPEG…GYPQ, RATP…ESTF, and TFTP…EHPL.

The protein resides in the cell membrane. Functionally, potential calcium-dependent cell-adhesion protein. This Pongo pygmaeus (Bornean orangutan) protein is Protocadherin-11 X-linked (PCDH11X).